Reading from the N-terminus, the 175-residue chain is Isopentenyl-diphosphate Delta-isomerase (175 aa).

Mn(2+) is bound by residues His23 and His30. The Nudix hydrolase domain maps to 28–162 (TLHLAFCVFV…PLRYTPWFRR (135 aa)). The active site involves Cys65. Mn(2+) is bound at residue His67. Glu85 contributes to the Mg(2+) binding site. 2 residues coordinate Mn(2+): Glu111 and Glu113. Residue Glu113 is part of the active site.

This sequence belongs to the IPP isomerase type 1 family. The cofactor is Mg(2+). Requires Mn(2+) as cofactor.

Its subcellular location is the cytoplasm. The catalysed reaction is isopentenyl diphosphate = dimethylallyl diphosphate. It functions in the pathway isoprenoid biosynthesis; dimethylallyl diphosphate biosynthesis; dimethylallyl diphosphate from isopentenyl diphosphate: step 1/1. Catalyzes the 1,3-allylic rearrangement of the homoallylic substrate isopentenyl (IPP) to its highly electrophilic allylic isomer, dimethylallyl diphosphate (DMAPP). The polypeptide is Isopentenyl-diphosphate Delta-isomerase (Halorhodospira halophila (strain DSM 244 / SL1) (Ectothiorhodospira halophila (strain DSM 244 / SL1))).